The chain runs to 827 residues: Xanthomonalisin (827 aa).

An N-terminal signal peptide occupies residues 1–23; the sequence is MKIEKTALTVAIALAMSSLSAHA. Residues 24 to 237 constitute a propeptide, removed in mature form; sequence EDAWVSTHTQ…GPNVGTQAAA (214 aa). A Peptidase S53 domain is found at 241–625; it reads AHHPQDFAAI…GKLNTYAQAN (385 aa). Residues glutamate 312, aspartate 316, and serine 544 each act as charge relay system in the active site. Ca(2+)-binding residues include aspartate 585, valine 586, alanine 601, glycine 603, and aspartate 605. Positions 635-722 constitute a PKD domain; the sequence is TNAPPVANFS…VTVSSSGGTG (88 aa). A propeptide spans 636–827 (removed in mature form); it reads NAPPVANFSV…GVSLKATWTN (192 aa).

The cofactor is Ca(2+). In terms of processing, autocatalytically processed.

It is found in the secreted. It carries out the reaction Cleavage of casein.. Inhibited by 1,2-epoxy-3-(p-nitrophenoxy)propane (EPNP), but not by pepstatin, pepstatin Ac (S-PI) and diazoacetyl-DL-norleucine methyl ester (DAN). Not inhibited by metal ions. Pepstatin-insensitive serine-carboxyl proteinase. Shows activity on acid-denatured hemoglobin and on casein. The chain is Xanthomonalisin from Xanthomonas sp. (strain T-22).